A 215-amino-acid polypeptide reads, in one-letter code: uncharacterized protein (215 aa).

5 consecutive transmembrane segments (helical) span residues 1–21 (MTAE…AIGM), 36–56 (VLIG…FADV), 67–87 (SRIA…NILV), 92–112 (IVGL…MVIG), and 118–138 (LGIY…QLTF).

Belongs to the MgtC/SapB family.

It is found in the cell inner membrane. This is an uncharacterized protein from Escherichia coli O157:H7.